Here is a 156-residue protein sequence, read N- to C-terminus: Ribosomal RNA large subunit methyltransferase H (156 aa).

S-adenosyl-L-methionine-binding positions include L73, G104, and 123-128 (LSKLTL).

This sequence belongs to the RNA methyltransferase RlmH family. In terms of assembly, homodimer.

The protein resides in the cytoplasm. It carries out the reaction pseudouridine(1915) in 23S rRNA + S-adenosyl-L-methionine = N(3)-methylpseudouridine(1915) in 23S rRNA + S-adenosyl-L-homocysteine + H(+). Specifically methylates the pseudouridine at position 1915 (m3Psi1915) in 23S rRNA. The polypeptide is Ribosomal RNA large subunit methyltransferase H (Idiomarina loihiensis (strain ATCC BAA-735 / DSM 15497 / L2-TR)).